The following is an 841-amino-acid chain: MFFSLKNSVAKLIAFWAICLVLPVWAGHYTFDPILLANNNINANANTDLSLFEQGGQLPGTYQVDIFLGDEKMDSTNVTFHAVKSPTGEYSLQSCLTKEQLSRYGVDVDNYPELLPPEKNIQQDKQASQCVNLAAIPQASEEFEFYAMRLVLNIPQVALRPKDEIPVERWDDGITAFLLNYMANSSTTTYRQTGEQQSSHYVQLYPGFNIGAWRIRNATSWNQSGNSAGKWQSSYIYATRGLYRLKSRVTLGQSYTPGDFFDSVPFSGVMLGDDDNMLPSSQRDFIPVVRGIARSQARVEVRQNGYLLYSTVVSPGPFELTDILPSHSNGDLHVTVLESNGTTQQFTVPYSVPAIRLRKGRLRYNLMAGRYRPANVDVETTPIAQATVAYGLPWNLTAFVGGQWSPHYQATTAGMGVMLGDYGALSSSITQATSEYRQQQPVKGQVWEVRYNKTLQASDTSFSVVNSQYSTADFSNLSDVLQSYRRHDYSRRDWHSNSLRNQTHVVVGQPLGQFGYLNLNWSRQNYRDAPASSSWGVQYSFNIGNLYCSLDWTQNQYRGNQDRLLSLSVSMPLGRERDTYAAYRMTSSDNSKDHEMSLYGHAFDNRLSWNVRQTERYAQFHSGENSGSLGLDWQGSYGDIGGNYYYTPTIRQFSANVSGGAVIHRHGLTLGPQINGTAALVEVPGVSGVSTSEDHRLKTDFRGYSIVPNIFPYEEHDILLETTDLPPDAEVTKTDAKVLPTEGAIVRASFSPQIGARALMTITRNNGETIPFGAMASLVNQPANAAIVDEGGKAYLTGLPETGQLLVQWGRGASQQCRVDYQLANAKKGDAGLYMLSGVCH.

The N-terminal stretch at 1–26 (MFFSLKNSVAKLIAFWAICLVLPVWA) is a signal peptide. A disulfide bond links cysteine 817 and cysteine 840.

The protein belongs to the fimbrial export usher family.

The protein resides in the cell outer membrane. Its function is as follows. Involved in the export and assembly of the MyfA fimbrial subunit. This chain is Outer membrane usher protein MyfC (myfC), found in Yersinia enterocolitica.